The primary structure comprises 377 residues: 3-dehydroquinate synthase (377 aa).

Residues 113–117, 137–138, lysine 150, and lysine 159 each bind NAD(+); these read GVIGD and TT. Residues glutamate 192, histidine 254, and histidine 273 each coordinate Zn(2+).

Belongs to the sugar phosphate cyclases superfamily. Dehydroquinate synthase family. Co(2+) is required as a cofactor. It depends on Zn(2+) as a cofactor. NAD(+) serves as cofactor.

The protein resides in the cytoplasm. It catalyses the reaction 7-phospho-2-dehydro-3-deoxy-D-arabino-heptonate = 3-dehydroquinate + phosphate. Its pathway is metabolic intermediate biosynthesis; chorismate biosynthesis; chorismate from D-erythrose 4-phosphate and phosphoenolpyruvate: step 2/7. Functionally, catalyzes the conversion of 3-deoxy-D-arabino-heptulosonate 7-phosphate (DAHP) to dehydroquinate (DHQ). This chain is 3-dehydroquinate synthase, found in Bartonella bacilliformis (strain ATCC 35685 / KC583 / Herrer 020/F12,63).